Consider the following 217-residue polypeptide: GTP cyclohydrolase 1 (217 aa).

3 residues coordinate Zn(2+): Cys109, His112, and Cys180.

It belongs to the GTP cyclohydrolase I family. In terms of assembly, homomer.

The enzyme catalyses GTP + H2O = 7,8-dihydroneopterin 3'-triphosphate + formate + H(+). It functions in the pathway cofactor biosynthesis; 7,8-dihydroneopterin triphosphate biosynthesis; 7,8-dihydroneopterin triphosphate from GTP: step 1/1. In Aliivibrio salmonicida (strain LFI1238) (Vibrio salmonicida (strain LFI1238)), this protein is GTP cyclohydrolase 1.